Consider the following 306-residue polypeptide: Putative HTH-type transcriptional regulatory protein Mhun_2548 (306 aa).

The 58-residue stretch at 132–189 folds into the HTH cro/C1-type domain; sequence LRELRETRSLSLGDLGQILGVSRRTVAKYEAGMGTTIEIALRIEETFDSGVIEPIDLI. The segment at residues 143-162 is a DNA-binding region (H-T-H motif); that stretch reads LGDLGQILGVSRRTVAKYEA.

The chain is Putative HTH-type transcriptional regulatory protein Mhun_2548 from Methanospirillum hungatei JF-1 (strain ATCC 27890 / DSM 864 / NBRC 100397 / JF-1).